We begin with the raw amino-acid sequence, 1442 residues long: Trafficking protein particle complex subunit 10 (1442 aa).

Residues Met1–Asp23 are compositionally biased toward polar residues. Disordered stretches follow at residues Met1–Ser86, Thr251–Lys277, Gly535–Ile564, Leu1208–Lys1238, Gln1316–Gln1335, and Leu1422–Thr1442. Residues Ser39–Ser86 show a composition bias toward low complexity. The span at Gly535–Gly553 shows a compositional bias: low complexity. A compositionally biased stretch (polar residues) spans Lys554 to Ile564. Over residues Leu1208 to His1236 the composition is skewed to low complexity. The segment covering Asn1425 to Thr1442 has biased composition (low complexity).

This sequence belongs to the TMEM1 family. In terms of assembly, part of the multisubunit TRAPP (transport protein particle) complex.

It is found in the golgi apparatus. The protein resides in the cis-Golgi network. Functionally, may play a role in vesicular transport from endoplasmic reticulum to Golgi. This Dictyostelium discoideum (Social amoeba) protein is Trafficking protein particle complex subunit 10 (trapcc10-1).